Consider the following 134-residue polypeptide: Ribosome-binding factor A (134 aa).

Belongs to the RbfA family. Monomer. Binds 30S ribosomal subunits, but not 50S ribosomal subunits or 70S ribosomes.

The protein resides in the cytoplasm. Its function is as follows. One of several proteins that assist in the late maturation steps of the functional core of the 30S ribosomal subunit. Associates with free 30S ribosomal subunits (but not with 30S subunits that are part of 70S ribosomes or polysomes). Required for efficient processing of 16S rRNA. May interact with the 5'-terminal helix region of 16S rRNA. This chain is Ribosome-binding factor A, found in Sinorhizobium medicae (strain WSM419) (Ensifer medicae).